Reading from the N-terminus, the 606-residue chain is Ubiquitin-like modifier-activating enzyme ATG7 (606 aa).

The GXGXXG motif signature appears at G316–G321. C488 functions as the Glycyl thioester intermediate in the catalytic mechanism. A homodimerization region spans residues A567 to G606.

Belongs to the ATG7 family. Homodimer. Interacts with ATG8 through a thioester bond between Cys-488 and the C-terminal Gly of ATG8 and with ATG12 through a thioester bond between Cys-488 and the C-terminal Gly of ATG12. Also interacts with ATG3.

Its subcellular location is the cytoplasm. The protein localises to the preautophagosomal structure. E1-like activating enzyme involved in the 2 ubiquitin-like systems required for cytoplasm to vacuole transport (Cvt) and autophagy. Activates ATG12 for its conjugation with ATG5 and ATG8 for its conjugation with phosphatidylethanolamine. Both systems are needed for the ATG8 association to Cvt vesicles and autophagosomes membranes. Autophagy is essential for maintenance of amino acid levels and protein synthesis under nitrogen starvation. Required for selective autophagic degradation of the nucleus (nucleophagy) as well as for mitophagy which contributes to regulate mitochondrial quantity and quality by eliminating the mitochondria to a basal level to fulfill cellular energy requirements and preventing excess ROS production. The chain is Ubiquitin-like modifier-activating enzyme ATG7 from Kluyveromyces marxianus (strain DMKU3-1042 / BCC 29191 / NBRC 104275) (Yeast).